Reading from the N-terminus, the 395-residue chain is Zinc-regulated GTPase metalloprotein activator 1B (395 aa).

The segment at 1–36 (MLPAVGSADEEEDPAEEDCPELVPMETTQSEEEEKS) is disordered. The segment covering 8–20 (ADEEEDPAEEDCP) has biased composition (acidic residues). Positions 17-24 (EDCPELVP) match the psi-PxLVp motif motif. A GTP-binding site is contributed by 49 to 56 (GYLGAGKT). Positions 107, 109, and 110 each coordinate Zn(2+). Positions 107–110 (CLCC) match the CXCC motif motif. Residues 110–114 (CSVKD) and 203–206 (NKTD) contribute to the GTP site. One can recognise a CobW C-terminal domain in the interval 274-377 (IVTITFEVPG…ILKQLFIATV (104 aa)).

The protein belongs to the SIMIBI class G3E GTPase family. ZNG1 subfamily.

It localises to the nucleus. It carries out the reaction GTP + H2O = GDP + phosphate + H(+). Zinc chaperone that directly transfers zinc cofactor to target metalloproteins, thereby activating them. Catalyzes zinc insertion into the active site of methionine aminopeptidase METAP1, which function to cleave the initiator methionine from polypeptides during or after protein translation. Mechanistically, the N-terminal psi-PxLVp motif binds to the C6H2-type zinc finger of inactive form of METAP1. After formation of the docked complex, zinc is transferred from the CXCC motif in the GTPase domain of ZNG1B to the zinc binding site in the peptidase domain of METAP1 in a process requiring GTP hydrolysis. GTP/GDP exchange is required for release of active METAP1. The sequence is that of Zinc-regulated GTPase metalloprotein activator 1B from Homo sapiens (Human).